A 69-amino-acid polypeptide reads, in one-letter code: Large ribosomal subunit protein bL31 (69 aa).

Belongs to the bacterial ribosomal protein bL31 family. Type A subfamily. In terms of assembly, part of the 50S ribosomal subunit.

Functionally, binds the 23S rRNA. The protein is Large ribosomal subunit protein bL31 of Mycoplasmopsis pulmonis (strain UAB CTIP) (Mycoplasma pulmonis).